Consider the following 721-residue polypeptide: Polyribonucleotide nucleotidyltransferase (721 aa).

Positions 495 and 501 each coordinate Mg(2+). The KH domain occupies 562–621; sequence PRLLSFRIDPELIGTVIGPGGRTIKGITERTNTKIDIEDGGIVTIASHDGAAAEEAQKII. The 69-residue stretch at 631–699 folds into the S1 motif domain; sequence GEIFPGVVTR…SRGRINLTLR (69 aa). Residues 702–721 form a disordered region; sequence GQNGGMSYPEPTPTPVAPLS. Over residues 711 to 721 the composition is skewed to pro residues; sequence EPTPTPVAPLS.

This sequence belongs to the polyribonucleotide nucleotidyltransferase family. It depends on Mg(2+) as a cofactor.

The protein localises to the cytoplasm. The enzyme catalyses RNA(n+1) + phosphate = RNA(n) + a ribonucleoside 5'-diphosphate. Involved in mRNA degradation. Catalyzes the phosphorolysis of single-stranded polyribonucleotides processively in the 3'- to 5'-direction. This Prochlorococcus marinus (strain MIT 9301) protein is Polyribonucleotide nucleotidyltransferase.